Consider the following 330-residue polypeptide: 4-hydroxythreonine-4-phosphate dehydrogenase (330 aa).

Substrate is bound by residues histidine 134 and threonine 135. Residues histidine 164, histidine 209, and histidine 264 each coordinate a divalent metal cation. Substrate is bound by residues lysine 272, asparagine 281, and arginine 290.

It belongs to the PdxA family. As to quaternary structure, homodimer. Zn(2+) is required as a cofactor. Mg(2+) serves as cofactor. Requires Co(2+) as cofactor.

The protein localises to the cytoplasm. It carries out the reaction 4-(phosphooxy)-L-threonine + NAD(+) = 3-amino-2-oxopropyl phosphate + CO2 + NADH. It participates in cofactor biosynthesis; pyridoxine 5'-phosphate biosynthesis; pyridoxine 5'-phosphate from D-erythrose 4-phosphate: step 4/5. Catalyzes the NAD(P)-dependent oxidation of 4-(phosphooxy)-L-threonine (HTP) into 2-amino-3-oxo-4-(phosphooxy)butyric acid which spontaneously decarboxylates to form 3-amino-2-oxopropyl phosphate (AHAP). In Pseudoalteromonas translucida (strain TAC 125), this protein is 4-hydroxythreonine-4-phosphate dehydrogenase.